The chain runs to 177 residues: Large ribosomal subunit protein uL10 (177 aa).

The protein belongs to the universal ribosomal protein uL10 family. In terms of assembly, part of the ribosomal stalk of the 50S ribosomal subunit. The N-terminus interacts with L11 and the large rRNA to form the base of the stalk. The C-terminus forms an elongated spine to which L12 dimers bind in a sequential fashion forming a multimeric L10(L12)X complex.

In terms of biological role, forms part of the ribosomal stalk, playing a central role in the interaction of the ribosome with GTP-bound translation factors. This chain is Large ribosomal subunit protein uL10, found in Legionella pneumophila (strain Paris).